Reading from the N-terminus, the 175-residue chain is Viral interleukin-10 homolog (175 aa).

The N-terminal stretch at 1 to 19 is a signal peptide; that stretch reads MLSVMVSSSLVLIVFFLGA. Cystine bridges form between C37-C127 and C81-C132. N151 carries an N-linked (GlcNAc...) asparagine; by host glycan.

This sequence belongs to the IL-10 family. In terms of assembly, homodimer; disulfide-linked.

The protein resides in the secreted. In terms of biological role, functional viral IL-10 homolog. Can bind to the human IL-10 receptor and compete with human IL-10 for binding sites. Requires both subunits of the human IL-10 receptor complex to induce signal transduction events and biological activities. IL-10 signaling pathway has several immunosuppressive activities that are exploited by the virus. Inhibits TLR-induced type I interferon production in host plasmacytoid dendritic cells. The chain is Viral interleukin-10 homolog (UL111A) from Human cytomegalovirus (strain AD169) (HHV-5).